A 138-amino-acid polypeptide reads, in one-letter code: Transcription antitermination protein NusB (138 aa).

Belongs to the NusB family.

Its function is as follows. Involved in transcription antitermination. Required for transcription of ribosomal RNA (rRNA) genes. Binds specifically to the boxA antiterminator sequence of the ribosomal RNA (rrn) operons. The sequence is that of Transcription antitermination protein NusB from Coxiella burnetii (strain CbuK_Q154) (Coxiella burnetii (strain Q154)).